A 506-amino-acid polypeptide reads, in one-letter code: tRNA-2-methylthio-N(6)-dimethylallyladenosine synthase (506 aa).

The region spanning 14–132 is the MTTase N-terminal domain; sequence KSYEVRTYGC…LPVLLERARV (119 aa). [4Fe-4S] cluster contacts are provided by C23, C61, C95, C169, C173, and C176. Residues 155–386 form the Radical SAM core domain; it reads RESAYAAWVS…ALQEQISWDE (232 aa). In terms of domain architecture, TRAM spans 388 to 456; sequence KKQVGRTLDV…PHHLLAEGTP (69 aa).

Belongs to the methylthiotransferase family. MiaB subfamily. In terms of assembly, monomer. Requires [4Fe-4S] cluster as cofactor.

Its subcellular location is the cytoplasm. The catalysed reaction is N(6)-dimethylallyladenosine(37) in tRNA + (sulfur carrier)-SH + AH2 + 2 S-adenosyl-L-methionine = 2-methylsulfanyl-N(6)-dimethylallyladenosine(37) in tRNA + (sulfur carrier)-H + 5'-deoxyadenosine + L-methionine + A + S-adenosyl-L-homocysteine + 2 H(+). Catalyzes the methylthiolation of N6-(dimethylallyl)adenosine (i(6)A), leading to the formation of 2-methylthio-N6-(dimethylallyl)adenosine (ms(2)i(6)A) at position 37 in tRNAs that read codons beginning with uridine. The protein is tRNA-2-methylthio-N(6)-dimethylallyladenosine synthase of Streptomyces griseus subsp. griseus (strain JCM 4626 / CBS 651.72 / NBRC 13350 / KCC S-0626 / ISP 5235).